The following is a 591-amino-acid chain: Guanylate-binding protein 2 (591 aa).

The tract at residues Met1–Cys309 is GTPase domain (Globular). Residues Thr35–Asn276 enclose the GB1/RHD3-type G domain. GTP is bound by residues Gly45 to Ser52, Arg181 to Asp182, and Leu245. Cys588 carries the post-translational modification Cysteine methyl ester. Cys588 carries the S-geranylgeranyl cysteine lipid modification. A propeptide spans Asn589–Leu591 (removed in mature form).

The protein belongs to the TRAFAC class dynamin-like GTPase superfamily. GB1/RHD3 GTPase family. GB1 subfamily. In terms of assembly, homodimer; homodimerization occurs upon GTP-binding and is required for the association with membranous structures. Heterodimer with other family members, including GBP1, GBP3, GBP4 and GBP5. In terms of processing, (Microbial infection) Ubiquitinated by S.flexneri IpaH9.8, leading to its degradation by the proteasome, thereby preventing its ability to promote host defense against bacterial infection. Post-translationally, isoprenylation is required for proper subcellular location.

It is found in the cytoplasmic vesicle membrane. Its subcellular location is the golgi apparatus membrane. The protein localises to the cytoplasm. It localises to the perinuclear region. It carries out the reaction GTP + H2O = GDP + phosphate + H(+). Functionally, interferon (IFN)-inducible GTPase that plays important roles in innate immunity against a diverse range of bacterial, viral and protozoan pathogens. Hydrolyzes GTP to GMP in 2 consecutive cleavage reactions, but the major reaction product is GDP. Following infection, recruited to the pathogen-containing vacuoles or vacuole-escaped bacteria and acts as a positive regulator of inflammasome assembly by promoting the release of inflammasome ligands from bacteria. Acts by promoting lysis of pathogen-containing vacuoles, releasing pathogens into the cytosol. Following pathogen release in the cytosol, promotes recruitment of proteins that mediate bacterial cytolysis: this liberates ligands that are detected by inflammasomes, such as lipopolysaccharide (LPS) that activates the non-canonical CASP4/CASP11 inflammasome or double-stranded DNA (dsDNA) that activates the AIM2 inflammasome. Confers protection to the protozoan pathogen Toxoplasma gondii. Independently of its GTPase activity, acts as an inhibitor of various viruses infectivity, such as HIV-1, Zika and influenza A viruses, by inhibiting FURIN-mediated maturation of viral envelope proteins. The chain is Guanylate-binding protein 2 from Homo sapiens (Human).